A 332-amino-acid polypeptide reads, in one-letter code: Flotillin-like protein FloA (332 aa).

2 helical membrane passes run Leu-6–Val-26 and Val-28–Gly-48.

Belongs to the flotillin-like FloA family. As to quaternary structure, homooligomerizes.

Its subcellular location is the cell membrane. It localises to the membrane raft. Functionally, found in functional membrane microdomains (FMM) that may be equivalent to eukaryotic membrane rafts. FMMs are highly dynamic and increase in number as cells age. Flotillins are thought to be important factors in membrane fluidity. In Symbiobacterium thermophilum (strain DSM 24528 / JCM 14929 / IAM 14863 / T), this protein is Flotillin-like protein FloA.